We begin with the raw amino-acid sequence, 324 residues long: Phosphomevalonate decarboxylase (324 aa).

This sequence belongs to the phosphomevalonate decarboxylase family.

It carries out the reaction (R)-5-phosphomevalonate + ATP = isopentenyl phosphate + ADP + phosphate + CO2. With respect to regulation, is strongly inhibited by 6-fluoromevalonate monophosphate but shows negligible inhibition by 6-fluoromevalonate diphosphate (a potent inhibitor of the classical mevalonate pathway). In terms of biological role, catalyzes the decarboxylation of mevalonate 5-phosphate (MVAP) to isopentenyl phosphate (IP). Functions in an alternate mevalonate (MVA) pathway leading to isopentenyl diphosphate (IPP), a key precursor for the biosynthesis of isoprenoid compounds such as archaeal membrane lipids. The sequence is that of Phosphomevalonate decarboxylase (mvaD) from Haloferax volcanii (strain ATCC 29605 / DSM 3757 / JCM 8879 / NBRC 14742 / NCIMB 2012 / VKM B-1768 / DS2) (Halobacterium volcanii).